Here is a 149-residue protein sequence, read N- to C-terminus: FAD synthase (149 aa).

Residues 15–16 (VF), 20–23 (HVGH), and aspartate 101 contribute to the ATP site.

It belongs to the archaeal FAD synthase family. Homodimer. Requires a divalent metal cation as cofactor.

The catalysed reaction is FMN + ATP + H(+) = FAD + diphosphate. The protein operates within cofactor biosynthesis; FAD biosynthesis; FAD from FMN: step 1/1. Functionally, catalyzes the transfer of the AMP portion of ATP to flavin mononucleotide (FMN) to produce flavin adenine dinucleotide (FAD) coenzyme. In Thermococcus kodakarensis (strain ATCC BAA-918 / JCM 12380 / KOD1) (Pyrococcus kodakaraensis (strain KOD1)), this protein is FAD synthase.